Consider the following 442-residue polypeptide: tRNA-2-methylthio-N(6)-dimethylallyladenosine synthase (442 aa).

In terms of domain architecture, MTTase N-terminal spans 2-120; that stretch reads KKVFIRTFGC…LPKMIVDKET (119 aa). Cys-11, Cys-49, Cys-83, Cys-157, Cys-161, and Cys-164 together coordinate [4Fe-4S] cluster. The Radical SAM core domain maps to 143–375; the sequence is RVEGGAAFVS…NEVIEAETAR (233 aa). The 64-residue stretch at 378–441 folds into the TRAM domain; the sequence is QTMIGTVQRC…TFSLRGKIVE (64 aa).

This sequence belongs to the methylthiotransferase family. MiaB subfamily. Monomer. Requires [4Fe-4S] cluster as cofactor.

It is found in the cytoplasm. It catalyses the reaction N(6)-dimethylallyladenosine(37) in tRNA + (sulfur carrier)-SH + AH2 + 2 S-adenosyl-L-methionine = 2-methylsulfanyl-N(6)-dimethylallyladenosine(37) in tRNA + (sulfur carrier)-H + 5'-deoxyadenosine + L-methionine + A + S-adenosyl-L-homocysteine + 2 H(+). Catalyzes the methylthiolation of N6-(dimethylallyl)adenosine (i(6)A), leading to the formation of 2-methylthio-N6-(dimethylallyl)adenosine (ms(2)i(6)A) at position 37 in tRNAs that read codons beginning with uridine. The sequence is that of tRNA-2-methylthio-N(6)-dimethylallyladenosine synthase from Neisseria gonorrhoeae (strain NCCP11945).